The following is a 102-amino-acid chain: MQKARIRLSGTNPATLDEICNQVRGIAQRTGVHMAGPIPLPTKRLVVPCRKSPDGEGSATWDHWEMRVHKRLIDLDADERALRQLMRIQVPKNVNIEIVLES.

It belongs to the universal ribosomal protein uS10 family. Part of the 30S ribosomal subunit.

Involved in the binding of tRNA to the ribosomes. This is Small ribosomal subunit protein uS10 from Methanothrix thermoacetophila (strain DSM 6194 / JCM 14653 / NBRC 101360 / PT) (Methanosaeta thermophila).